The following is a 449-amino-acid chain: MRVSCVYATASRWGGPPVASEVRGDAAISTTPDAAPGLAARRRRILFVAEAVTLAHVVRPFALAQSLDPSRYEVHFACDPRYNQLLGPLPFRHHAIHTIPSERFFGNLTQGRFYAMRTLRKYVEADLRVLDEIAPDLVVGDLRISLSVSARLAGIPYIAIANAYWSPYAQRRFPLPDVIWTRLFGVRLVKLLYRLERPLLFALQCMPLNWVRRRHGLSSLGWNLCRIFTDGDHTLYADVPELMPTYDLPANHEYLGPVLWSPAGKPPTWWDSLPTDRPIVYATLGTSGGRNLLQLVLNALAELPVTVIAATAGRSDLKTVPANAFVADYLPGEAAAARSAVVVCNGGSLTTQQALVAGVPVIGVAGNLDQHLNMEAVERAGAGVLLRTERLKSQRVAGAVMQVISRSEYRQAAARLADAFGRDRVGFPQHVENALRLMPENRPRTWLAS.

The protein belongs to the glycosyltransferase 28 family.

Functionally, catalyzes the transfer of the first rhamnosyl residue on p-hydroxybenzoic acid or phenolphthiocerol derivatives to form, after O-methylation at position 2 of the sugar unit, mono-O-methyl-glycosyl-p-hydroxybenzoic acid derivative (p-HBAD I) and 2-O-methyl-rhamnosyl-phenolphthiocerol dimycocerosate (also called mycoside B) during p-hydroxybenzoic acid derivatives (p-HBAD) and glycosylated phenolphthiocerol dimycocerosates (PGL) biosynthesis. In Mycobacterium bovis (strain BCG / Pasteur 1173P2), this protein is PGL/p-HBAD biosynthesis rhamnosyltransferase.